The following is a 568-amino-acid chain: Nucleolar protein 58 (568 aa).

Residues 293–417 (IAPNLTALVG…LESRLRALEH (125 aa)) enclose the Nop domain. The interval 430 to 568 (ANGQQGRQQP…KKKKKKKKDE (139 aa)) is disordered. Positions 471–482 (EEVKEEKDEKKD) are enriched in basic and acidic residues. Residues 522–533 (RKEAKKAAKAAK) are compositionally biased toward basic residues. Positions 534-544 (KAAEESGDGDK) are enriched in basic and acidic residues.

Belongs to the NOP5/NOP56 family.

It localises to the nucleus. The protein localises to the nucleolus. In terms of biological role, required for pre-18S rRNA processing. May bind microtubules. The chain is Nucleolar protein 58 (NOP58) from Cryptococcus neoformans var. neoformans serotype D (strain JEC21 / ATCC MYA-565) (Filobasidiella neoformans).